The primary structure comprises 163 residues: Cuticle protein 38 (163 aa).

14 tandem repeats follow at residues 7 to 10 (AAPV), 13 to 16 (AAPA), 20 to 23 (AAPA), 26 to 29 (AAPV), 56 to 59 (AAPA), 62 to 65 (AAPA), 68 to 71 (AAPA), 75 to 78 (AAPA), 81 to 84 (AAPA), 93 to 96 (AAPV), 123 to 126 (AAPA), 135 to 138 (AAPA), 141 to 144 (AAPA), and 156 to 159 (AAPV).

Its function is as follows. Component of the cuticle of migratory locust which contains more than 100 different structural proteins. The chain is Cuticle protein 38 from Locusta migratoria (Migratory locust).